The sequence spans 419 residues: UDP-N-acetylglucosamine 1-carboxyvinyltransferase (419 aa).

Residue K22–N23 participates in phosphoenolpyruvate binding. R93 is a UDP-N-acetyl-alpha-D-glucosamine binding site. Residue C117 is the Proton donor of the active site. Residue C117 is modified to 2-(S-cysteinyl)pyruvic acid O-phosphothioketal. Residues D306 and I328 each coordinate UDP-N-acetyl-alpha-D-glucosamine.

It belongs to the EPSP synthase family. MurA subfamily.

Its subcellular location is the cytoplasm. It carries out the reaction phosphoenolpyruvate + UDP-N-acetyl-alpha-D-glucosamine = UDP-N-acetyl-3-O-(1-carboxyvinyl)-alpha-D-glucosamine + phosphate. It functions in the pathway cell wall biogenesis; peptidoglycan biosynthesis. Its function is as follows. Cell wall formation. Adds enolpyruvyl to UDP-N-acetylglucosamine. This chain is UDP-N-acetylglucosamine 1-carboxyvinyltransferase, found in Vesicomyosocius okutanii subsp. Calyptogena okutanii (strain HA).